The sequence spans 317 residues: Putative 12-oxophytodienoate reductase 10 (317 aa).

FMN is bound at residue Pro26–Gly28. Position 117–120 (His117–Asn120) interacts with substrate. Tyr122 serves as the catalytic Proton donor. Position 169 (Arg169) interacts with FMN. Arg209 serves as a coordination point for substrate. FMN contacts are provided by residues Gly244 and Gly265–Arg266.

This sequence belongs to the NADH:flavin oxidoreductase/NADH oxidase family. Requires FMN as cofactor.

Putative oxophytodienoate reductase that may be involved in the biosynthesis or metabolism of oxylipin signaling molecules. The sequence is that of Putative 12-oxophytodienoate reductase 10 (OPR10) from Oryza sativa subsp. japonica (Rice).